The chain runs to 423 residues: Lipase member M (423 aa).

Positions 1 to 33 (MLETLSRQWIVSHRMEMWLLILVAYMFQRNVNS) are cleaved as a signal peptide. N-linked (GlcNAc...) asparagine glycosylation occurs at Asn-48. The 301-residue stretch at 92-392 (PVVLLQHGLV…EWAHVDFIWG (301 aa)) folds into the AB hydrolase-1 domain. Ser-186 serves as the catalytic Nucleophile. Cys-260 and Cys-269 form a disulfide bridge. Active-site charge relay system residues include Asp-357 and His-386.

This sequence belongs to the AB hydrolase superfamily. Lipase family. As to expression, exclusively expressed in the epidermis within the granular keratinocytes.

It is found in the secreted. Functionally, plays a highly specific role in the last step of keratinocyte differentiation. May have an essential function in lipid metabolism of the most differentiated epidermal layers. In Homo sapiens (Human), this protein is Lipase member M (LIPM).